The chain runs to 590 residues: Aspartate--tRNA(Asp/Asn) ligase (590 aa).

E175 contacts L-aspartate. The interval 199–202 (QQYK) is aspartate. 2 residues coordinate L-aspartate: R221 and H450. Position 221 to 223 (221 to 223 (RDE)) interacts with ATP. ATP is bound at residue E484. An L-aspartate-binding site is contributed by R491. 536–539 (GVDR) contacts ATP.

It belongs to the class-II aminoacyl-tRNA synthetase family. Type 1 subfamily. Homodimer.

It localises to the cytoplasm. It carries out the reaction tRNA(Asx) + L-aspartate + ATP = L-aspartyl-tRNA(Asx) + AMP + diphosphate. Aspartyl-tRNA synthetase with relaxed tRNA specificity since it is able to aspartylate not only its cognate tRNA(Asp) but also tRNA(Asn). Reaction proceeds in two steps: L-aspartate is first activated by ATP to form Asp-AMP and then transferred to the acceptor end of tRNA(Asp/Asn). This Bradyrhizobium sp. (strain BTAi1 / ATCC BAA-1182) protein is Aspartate--tRNA(Asp/Asn) ligase.